A 126-amino-acid chain; its full sequence is Protein ApaG (126 aa).

The 125-residue stretch at 2–126 (SDPRYQIDVS…FRLAVPGALH (125 aa)) folds into the ApaG domain.

The polypeptide is Protein ApaG (Pseudomonas putida (strain W619)).